The primary structure comprises 388 residues: Zinc finger CCCH domain-containing protein 47 (388 aa).

Disordered stretches follow at residues methionine 1–leucine 130 and proline 144–alanine 282. Basic and acidic residues-rich tracts occupy residues alanine 61 to valine 109 and proline 181 to arginine 193. A compositionally biased stretch (low complexity) spans alanine 260–serine 274. 2 consecutive C3H1-type zinc fingers follow at residues histidine 321–glutamate 348 and glycine 359–valine 388.

This Oryza sativa subsp. japonica (Rice) protein is Zinc finger CCCH domain-containing protein 47.